We begin with the raw amino-acid sequence, 293 residues long: Proteinase T (293 aa).

The propeptide occupies glutamate 1–serine 12. The region spanning proline 19–alanine 293 is the Peptidase S8 domain. Disulfide bonds link cysteine 46–cysteine 137 and cysteine 192–cysteine 262. Catalysis depends on charge relay system residues aspartate 51, histidine 83, and serine 238.

This sequence belongs to the peptidase S8 family.

Serine proteinase. The protein is Proteinase T (PROT) of Parengyodontium album (Tritirachium album).